A 469-amino-acid chain; its full sequence is Aspartyl/glutamyl-tRNA(Asn/Gln) amidotransferase subunit B (469 aa).

The protein belongs to the GatB/GatE family. GatB subfamily. As to quaternary structure, heterotrimer of A, B and C subunits.

It catalyses the reaction L-glutamyl-tRNA(Gln) + L-glutamine + ATP + H2O = L-glutaminyl-tRNA(Gln) + L-glutamate + ADP + phosphate + H(+). The catalysed reaction is L-aspartyl-tRNA(Asn) + L-glutamine + ATP + H2O = L-asparaginyl-tRNA(Asn) + L-glutamate + ADP + phosphate + 2 H(+). Allows the formation of correctly charged Asn-tRNA(Asn) or Gln-tRNA(Gln) through the transamidation of misacylated Asp-tRNA(Asn) or Glu-tRNA(Gln) in organisms which lack either or both of asparaginyl-tRNA or glutaminyl-tRNA synthetases. The reaction takes place in the presence of glutamine and ATP through an activated phospho-Asp-tRNA(Asn) or phospho-Glu-tRNA(Gln). This Thermus thermophilus (strain ATCC BAA-163 / DSM 7039 / HB27) protein is Aspartyl/glutamyl-tRNA(Asn/Gln) amidotransferase subunit B.